The chain runs to 434 residues: MRRSPKGSPGAVLDLQRRVDQAVSADHAELMTIAKDANTFFGAESVQDPYPLYERMRAAGSVHRIANSDFYAVCGWDAVNEAIGRPEDFSSNLTATMTYTAEGTAKPFEMDPLGGPTHVLATADDPAHAVHRKLVLRHLAAKRIRVMEQFTVQAADRLWVDGMQDGCIEWMGAMANRLPMMVVAELIGLPDPDIAQLVKWGYAATQLLEGLVENDQLVAAGVALMELSGYIFEQFDRAAADPRDNLLGELATACASGELDTLTAQVMMVTLFAAGGESTAALLGSAVWILATRPDIQQQVRANPELLGAFIEETLRYEPPFRGHYRHVRNATTLDGTELPADSHLLLLWGAANRDPAQFEAPGEFRLDRAGGKGHISFGKGAHFCVGAALARLEARIVLRLLLDRTSVIEAADVGGWLPSILVRRIERLELAVQ.

2 residues coordinate substrate: D124 and H128. Heme contacts are provided by R132, R326, H383, and C385.

It belongs to the cytochrome P450 family. As to quaternary structure, monomer. Requires heme as cofactor.

This chain is Cytochrome P450 144 (cyp144), found in Mycobacterium tuberculosis (strain CDC 1551 / Oshkosh).